The chain runs to 276 residues: ARL14 effector protein (276 aa).

The interval 159-183 (QTEFAPESGKREKRKLTKNASASSD) is disordered. Lys176 participates in a covalent cross-link: Glycyl lysine isopeptide (Lys-Gly) (interchain with G-Cter in SUMO2). A phosphoserine mark is found at Ser182 and Ser266.

Interacts with ARL14 and MYO1E.

It is found in the cytoplasm. In terms of biological role, through its interaction with ARL14 and MYO1E, may connect MHC class II-containing cytoplasmic vesicles to the actin network and hence controls the movement of these vesicles along the actin cytoskeleton in dendritic cells. This is ARL14 effector protein (Arl14ep) from Rattus norvegicus (Rat).